A 317-amino-acid chain; its full sequence is MALENLLHPTNIKIDEYAKNATKFSFEALERGVGYTLGFALKQTMLYSIAGACVTSIKINDGKVTSLEDVIPCDETVADIILNVKSLSVTLAEDVETGTITFELSGSEEEIFSEEAKLSEGLAITEEVFICSYNGGKKLKIEAKVEKGVGFRPAQDNFKDGEFLLDATFSPVVFCDFEIKDARVGRRTDLDKLELNIKTNGNVNCEEALRLAATKIQNQLRNIVDIEEINKGIFVEDPKDINPILLKHVEELNLTARSSNCLKAVNIRLIGELVQKTENELLKAPNFGKKSLTEIKDKLSELGLSLGTLIENWPQDL.

Positions 1-227 are alpha N-terminal domain (alpha-NTD); the sequence is MALENLLHPT…NQLRNIVDIE (227 aa). The interval 241–317 is alpha C-terminal domain (alpha-CTD); that stretch reads INPILLKHVE…TLIENWPQDL (77 aa).

This sequence belongs to the RNA polymerase alpha chain family. Homodimer. The RNAP catalytic core consists of 2 alpha, 1 beta, 1 beta' and 1 omega subunit. When a sigma factor is associated with the core the holoenzyme is formed, which can initiate transcription.

It carries out the reaction RNA(n) + a ribonucleoside 5'-triphosphate = RNA(n+1) + diphosphate. Its function is as follows. DNA-dependent RNA polymerase catalyzes the transcription of DNA into RNA using the four ribonucleoside triphosphates as substrates. The protein is DNA-directed RNA polymerase subunit alpha 2 of Francisella tularensis subsp. holarctica (strain LVS).